A 406-amino-acid chain; its full sequence is Elongation factor Tu (406 aa).

The tr-type G domain occupies 10-215; that stretch reads KPHVNVGTIG…AIDEYIPTPV (206 aa). The tract at residues 19–26 is G1; the sequence is GHVDHGKT. 19–26 serves as a coordination point for GTP; it reads GHVDHGKT. T26 serves as a coordination point for Mg(2+). The tract at residues 61-65 is G2; that stretch reads GITIN. The segment at 82 to 85 is G3; the sequence is DCPG. GTP is bound by residues 82–86 and 137–140; these read DCPGH and NKVD. Residues 137–140 are G4; sequence NKVD. The G5 stretch occupies residues 175–177; it reads SAL.

It belongs to the TRAFAC class translation factor GTPase superfamily. Classic translation factor GTPase family. EF-Tu/EF-1A subfamily. As to quaternary structure, monomer.

The protein localises to the cytoplasm. The catalysed reaction is GTP + H2O = GDP + phosphate + H(+). Its function is as follows. GTP hydrolase that promotes the GTP-dependent binding of aminoacyl-tRNA to the A-site of ribosomes during protein biosynthesis. The protein is Elongation factor Tu of Thermus thermophilus (strain ATCC BAA-163 / DSM 7039 / HB27).